Reading from the N-terminus, the 132-residue chain is Large ribosomal subunit protein uL14 (132 aa).

The protein belongs to the universal ribosomal protein uL14 family. Part of the 50S ribosomal subunit. Forms a cluster with proteins L3 and L24e, part of which may contact the 16S rRNA in 2 intersubunit bridges.

Binds to 23S rRNA. Forms part of two intersubunit bridges in the 70S ribosome. The chain is Large ribosomal subunit protein uL14 from Picrophilus torridus (strain ATCC 700027 / DSM 9790 / JCM 10055 / NBRC 100828 / KAW 2/3).